A 324-amino-acid chain; its full sequence is Myoblast determination protein 1 homolog (324 aa).

Residues 125-146 are disordered; it reads VDSQHEDTTTSTAGGAGVGGPR. A bHLH domain is found at 155 to 206; that stretch reads DRRKAATMRERRRLRKVNEAFEVVKQRTCPNPNQRLPKVEILRSAIDYINNL. A disordered region spans residues 251-272; that stretch reads YNPENMFDDDDLTDSDDDRDHH. Residues 256–267 are compositionally biased toward acidic residues; that stretch reads MFDDDDLTDSDD.

Efficient DNA binding requires dimerization with another bHLH protein. As to expression, body wall muscle cells; in clonal muscle precursors, in a set of early embryonic blastomeres (the ms-granddaughters), and in six glial-like cells called GLRS.

It is found in the nucleus. Functionally, involved in myogenesis, in cooperation with transcription factors unc-120 and hnd-1. Acts redundantly with fozi-1 to promote body wall muscle cell and coelomocyte specification in postembryonic mesoderm progenitors, probably through suppression of sem-2. The chain is Myoblast determination protein 1 homolog from Caenorhabditis elegans.